A 272-amino-acid chain; its full sequence is HMP-PP phosphatase (272 aa).

Residue D8 is the Nucleophile of the active site. Mg(2+) contacts are provided by D8, D10, and D212.

This sequence belongs to the HAD-like hydrolase superfamily. Cof family. Mg(2+) serves as cofactor.

It carries out the reaction 4-amino-2-methyl-5-(diphosphooxymethyl)pyrimidine + H2O = 4-amino-2-methyl-5-(phosphooxymethyl)pyrimidine + phosphate + H(+). Functionally, catalyzes the hydrolysis of 4-amino-2-methyl-5-hydroxymethylpyrimidine pyrophosphate (HMP-PP) to 4-amino-2-methyl-5-hydroxymethylpyrimidine phosphate (HMP-P). The protein is HMP-PP phosphatase of Salmonella typhi.